The sequence spans 231 residues: tRNA (guanine-N(1)-)-methyltransferase (231 aa).

S-adenosyl-L-methionine-binding positions include glycine 111 and 131–136; that span reads LGNYVL.

Belongs to the RNA methyltransferase TrmD family. Homodimer.

The protein localises to the cytoplasm. The catalysed reaction is guanosine(37) in tRNA + S-adenosyl-L-methionine = N(1)-methylguanosine(37) in tRNA + S-adenosyl-L-homocysteine + H(+). In terms of biological role, specifically methylates guanosine-37 in various tRNAs. The chain is tRNA (guanine-N(1)-)-methyltransferase from Leptospira interrogans serogroup Icterohaemorrhagiae serovar copenhageni (strain Fiocruz L1-130).